A 528-amino-acid chain; its full sequence is GMP synthase [glutamine-hydrolyzing] (528 aa).

Positions 22–212 (AILVLDFGSQ…VFKICQSQTN (191 aa)) constitute a Glutamine amidotransferase type-1 domain. The Nucleophile role is filled by C99. Active-site residues include H186 and E188. The 191-residue stretch at 213-403 (WSLESNVETI…LGIKKEALYR (191 aa)) folds into the GMPS ATP-PPase domain. An ATP-binding site is contributed by 240–246 (SGGTDSL).

Homodimer.

It carries out the reaction XMP + L-glutamine + ATP + H2O = GMP + L-glutamate + AMP + diphosphate + 2 H(+). It participates in purine metabolism; GMP biosynthesis; GMP from XMP (L-Gln route): step 1/1. Its function is as follows. Catalyzes the synthesis of GMP from XMP. In Borrelia garinii subsp. bavariensis (strain ATCC BAA-2496 / DSM 23469 / PBi) (Borreliella bavariensis), this protein is GMP synthase [glutamine-hydrolyzing].